The following is a 154-amino-acid chain: Deoxyuridine 5'-triphosphate nucleotidohydrolase (154 aa).

Substrate contacts are provided by residues 72–74 (RSG), Asn-85, 89–91 (LID), and Met-99.

Belongs to the dUTPase family. Mg(2+) is required as a cofactor.

The enzyme catalyses dUTP + H2O = dUMP + diphosphate + H(+). The protein operates within pyrimidine metabolism; dUMP biosynthesis; dUMP from dCTP (dUTP route): step 2/2. Functionally, this enzyme is involved in nucleotide metabolism: it produces dUMP, the immediate precursor of thymidine nucleotides and it decreases the intracellular concentration of dUTP so that uracil cannot be incorporated into DNA. This chain is Deoxyuridine 5'-triphosphate nucleotidohydrolase, found in Psychrobacter cryohalolentis (strain ATCC BAA-1226 / DSM 17306 / VKM B-2378 / K5).